A 291-amino-acid polypeptide reads, in one-letter code: Pirin (291 aa).

Residues His56, His58, His101, and Glu103 each coordinate Fe cation.

Belongs to the pirin family. May interact with NF1/CTF1. Interacts with BCL3. Identified in a complex comprised of PIR, BLC3, NFKB1 and target DNA. Fe cation serves as cofactor.

It is found in the nucleus. The protein localises to the cytoplasm. The catalysed reaction is quercetin + O2 = 2-(3,4-dihydroxybenzoyloxy)-4,6-dihydroxybenzoate + CO. The protein operates within flavonoid metabolism; quercetin degradation. Its function is as follows. Transcriptional coregulator of NF-kappa-B which facilitates binding of NF-kappa-B proteins to target kappa-B genes in a redox-state-dependent manner. May be required for efficient terminal myeloid maturation of hematopoietic cells. Has quercetin 2,3-dioxygenase activity (in vitro). In Rattus norvegicus (Rat), this protein is Pirin (Pir).